Reading from the N-terminus, the 444-residue chain is Protein EMP46 (444 aa).

The first 46 residues, 1–46 (MTTRKTASSLQLLGKITGTKAGTKQKKMNFINGLIWLYMCVWMVHG), serve as a signal peptide directing secretion. At 47–408 (KVTQKDELKW…YGKQTKGHDE (362 aa)) the chain is on the lumenal side. The L-type lectin-like domain occupies 52 to 269 (DELKWNKGYS…EILKMKLYDG (218 aa)). A K(+)-binding site is contributed by Tyr177. Cys196 and Cys230 form a disulfide bridge. Residues 409–429 (IFSKISVWLALLIFIMITLAY) form a helical membrane-spanning segment. The tract at residues 429–432 (YYMF) is mediates the interactions with COPI and COPII coat complexes. At 430–444 (YMFRINQDIKKVKLL) the chain is on the cytoplasmic side. The Di-lysine motif signature appears at 440-444 (KVKLL).

This sequence belongs to the EMP46/EMP47 family. Interacts with EMP47 in the endoplasmic reticulum membrane in order to be transported to the Golgi apparatus. Interacts with the coatomer proteins COP1, SEC21 and SEC23.

It is found in the golgi apparatus membrane. Its subcellular location is the endoplasmic reticulum membrane. In terms of biological role, involved in the secretion of glycoproteins and in nucleus architecture and gene silencing. This Saccharomyces cerevisiae (strain ATCC 204508 / S288c) (Baker's yeast) protein is Protein EMP46 (EMP46).